Here is a 556-residue protein sequence, read N- to C-terminus: Formate--tetrahydrofolate ligase (556 aa).

65-72 (TPAGEGKS) lines the ATP pocket.

Belongs to the formate--tetrahydrofolate ligase family.

The enzyme catalyses (6S)-5,6,7,8-tetrahydrofolate + formate + ATP = (6R)-10-formyltetrahydrofolate + ADP + phosphate. The protein operates within one-carbon metabolism; tetrahydrofolate interconversion. The chain is Formate--tetrahydrofolate ligase from Streptococcus pneumoniae (strain Taiwan19F-14).